A 299-amino-acid chain; its full sequence is 33 kDa chaperonin (299 aa).

Cystine bridges form between Cys-240/Cys-242 and Cys-273/Cys-276.

Belongs to the HSP33 family. Under oxidizing conditions two disulfide bonds are formed involving the reactive cysteines. Under reducing conditions zinc is bound to the reactive cysteines and the protein is inactive.

It localises to the cytoplasm. In terms of biological role, redox regulated molecular chaperone. Protects both thermally unfolding and oxidatively damaged proteins from irreversible aggregation. Plays an important role in the bacterial defense system toward oxidative stress. The chain is 33 kDa chaperonin from Thermosynechococcus vestitus (strain NIES-2133 / IAM M-273 / BP-1).